We begin with the raw amino-acid sequence, 48 residues long: Large ribosomal subunit protein bL33A (48 aa).

This sequence belongs to the bacterial ribosomal protein bL33 family.

The protein is Large ribosomal subunit protein bL33A of Streptococcus agalactiae serotype V (strain ATCC BAA-611 / 2603 V/R).